The following is a 219-amino-acid chain: Probable nicotinate-nucleotide adenylyltransferase (219 aa).

It belongs to the NadD family.

The enzyme catalyses nicotinate beta-D-ribonucleotide + ATP + H(+) = deamido-NAD(+) + diphosphate. It participates in cofactor biosynthesis; NAD(+) biosynthesis; deamido-NAD(+) from nicotinate D-ribonucleotide: step 1/1. In terms of biological role, catalyzes the reversible adenylation of nicotinate mononucleotide (NaMN) to nicotinic acid adenine dinucleotide (NaAD). The sequence is that of Probable nicotinate-nucleotide adenylyltransferase from Hahella chejuensis (strain KCTC 2396).